Reading from the N-terminus, the 158-residue chain is 6,7-dimethyl-8-ribityllumazine synthase (158 aa).

5-amino-6-(D-ribitylamino)uracil contacts are provided by residues phenylalanine 23, 57–59, and 81–83; these read AFE and TVI. Residue 86-87 participates in (2S)-2-hydroxy-3-oxobutyl phosphate binding; sequence GT. Residue histidine 89 is the Proton donor of the active site. Residue phenylalanine 114 coordinates 5-amino-6-(D-ribitylamino)uracil. Arginine 128 contributes to the (2S)-2-hydroxy-3-oxobutyl phosphate binding site.

The protein belongs to the DMRL synthase family.

It carries out the reaction (2S)-2-hydroxy-3-oxobutyl phosphate + 5-amino-6-(D-ribitylamino)uracil = 6,7-dimethyl-8-(1-D-ribityl)lumazine + phosphate + 2 H2O + H(+). It participates in cofactor biosynthesis; riboflavin biosynthesis; riboflavin from 2-hydroxy-3-oxobutyl phosphate and 5-amino-6-(D-ribitylamino)uracil: step 1/2. Catalyzes the formation of 6,7-dimethyl-8-ribityllumazine by condensation of 5-amino-6-(D-ribitylamino)uracil with 3,4-dihydroxy-2-butanone 4-phosphate. This is the penultimate step in the biosynthesis of riboflavin. The polypeptide is 6,7-dimethyl-8-ribityllumazine synthase (Desulforudis audaxviator (strain MP104C)).